A 97-amino-acid polypeptide reads, in one-letter code: CLAVATA3/ESR (CLE)-related protein ESR2-C (97 aa).

The disordered stretch occupies residues 1 to 97 (TRTDDKPGVN…IGPPPFLDRY (97 aa)). 2 positions are modified to hydroxyproline: P47 and P50. Residue P50 is glycosylated (O-linked (Ara...) hydroxyproline).

This sequence belongs to the CLV3/ESR signal peptide family. The O-glycosylation (arabinosylation) of the hydroxyproline Pro-50 enhances binding affinity of the ESR2Cp peptide for its receptor. As to expression, seed endosperm.

It is found in the secreted. Its subcellular location is the extracellular space. Functionally, extracellular signal peptide that regulates cell fate. This is CLAVATA3/ESR (CLE)-related protein ESR2-C from Zea mays (Maize).